Reading from the N-terminus, the 217-residue chain is Probable transaldolase (217 aa).

K83 functions as the Schiff-base intermediate with substrate in the catalytic mechanism.

The protein belongs to the transaldolase family. Type 3B subfamily.

It localises to the cytoplasm. The enzyme catalyses D-sedoheptulose 7-phosphate + D-glyceraldehyde 3-phosphate = D-erythrose 4-phosphate + beta-D-fructose 6-phosphate. It functions in the pathway carbohydrate degradation; pentose phosphate pathway; D-glyceraldehyde 3-phosphate and beta-D-fructose 6-phosphate from D-ribose 5-phosphate and D-xylulose 5-phosphate (non-oxidative stage): step 2/3. In terms of biological role, transaldolase is important for the balance of metabolites in the pentose-phosphate pathway. The sequence is that of Probable transaldolase from Phenylobacterium zucineum (strain HLK1).